Consider the following 1188-residue polypeptide: DNA-directed RNA polymerase subunit beta (1188 aa).

Residues 1149–1188 form a disordered region; the sequence is ELRDLDEGEDDDVMHVDDLEKAREKQAQETPEVSENSEEK. The span at 1161–1175 shows a compositional bias: basic and acidic residues; it reads VMHVDDLEKAREKQA.

Belongs to the RNA polymerase beta chain family. In terms of assembly, the RNAP catalytic core consists of 2 alpha, 1 beta, 1 beta' and 1 omega subunit. When a sigma factor is associated with the core the holoenzyme is formed, which can initiate transcription.

It carries out the reaction RNA(n) + a ribonucleoside 5'-triphosphate = RNA(n+1) + diphosphate. DNA-dependent RNA polymerase catalyzes the transcription of DNA into RNA using the four ribonucleoside triphosphates as substrates. The polypeptide is DNA-directed RNA polymerase subunit beta (Streptococcus uberis (strain ATCC BAA-854 / 0140J)).